The following is a 502-amino-acid chain: L-arabinose isomerase (502 aa).

The Mn(2+) site is built by E307, E334, H351, and H450.

It belongs to the arabinose isomerase family. Requires Mn(2+) as cofactor.

It carries out the reaction beta-L-arabinopyranose = L-ribulose. Its pathway is carbohydrate degradation; L-arabinose degradation via L-ribulose; D-xylulose 5-phosphate from L-arabinose (bacterial route): step 1/3. Catalyzes the conversion of L-arabinose to L-ribulose. The chain is L-arabinose isomerase from Nocardioides sp. (strain ATCC BAA-499 / JS614).